The sequence spans 577 residues: Signal peptide peptidase-like 2B (577 aa).

Positions 1–19 are cleaved as a signal peptide; it reads MAAARLAASLLLLAAQVAC. Over 20-168 the chain is Lumenal; that stretch reads EFGVLRVVPQ…APSEPVMDYN (149 aa). Residues 49–149 form the PA domain; that stretch reads LPHDLNKVSL…RDLQDIFRRF (101 aa). N-linked (GlcNAc...) asparagine glycosylation occurs at Asn91. A helical transmembrane segment spans residues 169–189; the sequence is MVIIFIMAVGTVALGGYWAGS. At 190–216 the chain is on the cytoplasmic side; that stretch reads HDVKKYMKHKRDDVPEKQEDEAVDVTP. The chain crosses the membrane as a helical span at residues 217 to 237; sequence VMICVFVVMCCFMLVLLYYFY. At 238-239 the chain is on the lumenal side; that stretch reads DR. A helical transmembrane segment spans residues 240-260; it reads LVYVIIGIFCLASSTGLYSCL. Residues 261–286 are Cytoplasmic-facing; sequence APCVRKLPFCTCRVPDNNLPYFHKRP. Residues 287-307 traverse the membrane as a helical segment; it reads QARMLLLALFCVTVSVVWGVF. Topologically, residues 308 to 312 are lumenal; sequence RNEDQ. Residues 313-333 form a helical membrane-spanning segment; that stretch reads WAWVLQDTLGIAFCLYMLRTI. Residues 334–341 are Cytoplasmic-facing; sequence RLPTFKAC. A helical transmembrane segment spans residues 342–362; sequence TLLLLVLFVYDIFFVFITPYL. Asp352 is a catalytic residue. Over 363–405 the chain is Lumenal; sequence TKSGNSIMVEVATGPSNSSTHEKLPMVLKVPRLNTSPLSLCDR. Residues 406–426 traverse the membrane as a helical segment; sequence PFSLLGFGDILVPGLLVAYCH. Asp414 is a catalytic residue. Over 427-438 the chain is Cytoplasmic; that stretch reads RFDIQVQSSRIY. Residues 439-459 traverse the membrane as a helical segment; that stretch reads FVACTIAYGLGLLVTFVALVL. Residues 460–463 are Lumenal-facing; that stretch reads MRHG. Residues 464 to 484 form a helical membrane-spanning segment; it reads QPALLYLVPCTLLTSCTVALW. Residues 465–467 carry the PAL motif; it reads PAL. The Cytoplasmic segment spans residues 485–577; sequence RREMGAFWTG…IPVVTPGTSA (93 aa). Residues 502-577 form a disordered region; it reads QTPWAAPQGP…IPVVTPGTSA (76 aa).

Belongs to the peptidase A22B family. In terms of assembly, monomer. Homodimer. Interacts with ITM2B and TNF. Glycosylated.

The protein localises to the cell membrane. Its subcellular location is the golgi apparatus membrane. The protein resides in the lysosome membrane. It is found in the endosome membrane. It localises to the membrane. Functionally, intramembrane-cleaving aspartic protease (I-CLiP) that cleaves type II membrane signal peptides in the hydrophobic plane of the membrane. Functions in ITM2B and TNF processing. Catalyzes the intramembrane cleavage of the anchored fragment of shed TNF-alpha (TNF), which promotes the release of the intracellular domain (ICD) for signaling to the nucleus. May play a role in the regulation of innate and adaptive immunity. The protein is Signal peptide peptidase-like 2B of Rattus norvegicus (Rat).